Reading from the N-terminus, the 730-residue chain is Double-strand break repair protein MRE11 (730 aa).

Mn(2+)-binding residues include Asp17, His19, Asp57, and Asn124. The active-site Proton donor is the His125. Mn(2+) contacts are provided by His213, His241, and His243. Residues 521–730 form a disordered region; that stretch reads LSGQQKQAQR…SMPARKSKRY (210 aa). A compositionally biased stretch (acidic residues) spans 581–591; it reads GDEDNLFEEEE. Over residues 595–633 the composition is skewed to low complexity; that stretch reads KTTAKRAPTTRATRKTAAATRATTATKASAPAKKSIAAP. A compositionally biased stretch (acidic residues) spans 645–659; sequence SAEEEEDVIMDDDDD. Residues 662-672 are compositionally biased toward pro residues; it reads PAPPVKAPPPK. Residues 685-704 show a composition bias toward polar residues; it reads TRQTTLNFSQAERPTRTTQK. Positions 708–719 are enriched in acidic residues; that stretch reads ISDDEISEDDAF.

This sequence belongs to the MRE11/RAD32 family. In terms of assembly, component of the MRN complex composed of two heterodimers RAD50 and MRE11 associated with a single NBS1. It depends on Mn(2+) as a cofactor.

It localises to the nucleus. It is found in the chromosome. The protein resides in the telomere. Functionally, core component of the MRN complex, which plays a central role in double-strand break (DSB) repair, DNA recombination, maintenance of telomere integrity and meiosis. The MRN complex is involved in the repair of DNA double-strand breaks (DSBs) via homologous recombination (HR), an error-free mechanism which primarily occurs during S and G2 phases. The complex (1) mediates the end resection of damaged DNA, which generates proper single-stranded DNA, a key initial steps in HR, and is (2) required for the recruitment of other repair factors and efficient activation of ATM and ATR upon DNA damage. Within the MRN complex, MRE11 possesses both single-strand endonuclease activity and double-strand-specific 3'-5' exonuclease activity. MRE11 first endonucleolytically cleaves the 5' strand at DNA DSB ends to prevent non-homologous end joining (NHEJ) and licence HR. It then generates a single-stranded DNA gap via 3' to 5' exonucleolytic degradation, which is required for single-strand invasion and recombination. This Chaetomium thermophilum (strain DSM 1495 / CBS 144.50 / IMI 039719) (Thermochaetoides thermophila) protein is Double-strand break repair protein MRE11.